The following is a 279-amino-acid chain: Thymidylate synthase (279 aa).

A dUMP-binding site is contributed by 133 to 134 (RR). The active-site Nucleophile is the Cys154. DUMP-binding positions include 178–181 (RSND), Asn189, and 219–221 (HIY). A (6R)-5,10-methylene-5,6,7,8-tetrahydrofolate-binding site is contributed by Asp181. Ala278 is a binding site for (6R)-5,10-methylene-5,6,7,8-tetrahydrofolate.

Belongs to the thymidylate synthase family. Bacterial-type ThyA subfamily. Homodimer.

Its subcellular location is the cytoplasm. The catalysed reaction is dUMP + (6R)-5,10-methylene-5,6,7,8-tetrahydrofolate = 7,8-dihydrofolate + dTMP. Its pathway is pyrimidine metabolism; dTTP biosynthesis. In terms of biological role, catalyzes the reductive methylation of 2'-deoxyuridine-5'-monophosphate (dUMP) to 2'-deoxythymidine-5'-monophosphate (dTMP) while utilizing 5,10-methylenetetrahydrofolate (mTHF) as the methyl donor and reductant in the reaction, yielding dihydrofolate (DHF) as a by-product. This enzymatic reaction provides an intracellular de novo source of dTMP, an essential precursor for DNA biosynthesis. In Streptococcus mutans serotype c (strain ATCC 700610 / UA159), this protein is Thymidylate synthase.